The chain runs to 305 residues: Acetylglutamate kinase (305 aa).

Substrate is bound by residues 75 to 76 (GG), Arg-97, and Asn-202.

This sequence belongs to the acetylglutamate kinase family. ArgB subfamily.

The protein resides in the cytoplasm. It carries out the reaction N-acetyl-L-glutamate + ATP = N-acetyl-L-glutamyl 5-phosphate + ADP. Its pathway is amino-acid biosynthesis; L-arginine biosynthesis; N(2)-acetyl-L-ornithine from L-glutamate: step 2/4. Catalyzes the ATP-dependent phosphorylation of N-acetyl-L-glutamate. In Rhodospirillum centenum (strain ATCC 51521 / SW), this protein is Acetylglutamate kinase.